The chain runs to 636 residues: LEAF RUST 10 DISEASE-RESISTANCE LOCUS RECEPTOR-LIKE PROTEIN KINASE-like 1.5 (636 aa).

Residues 1–26 form the signal peptide; it reads MSQPPWRCFSLLIFVLTIFSTKPSSA. Residues 27–257 lie on the Extracellular side of the membrane; it reads STSCSSSFHC…NNKRVNHIAV (231 aa). Residues Asn73, Asn102, Asn146, and Asn224 are each glycosylated (N-linked (GlcNAc...) asparagine). Residues 258-278 form a helical membrane-spanning segment; sequence LSLIFALTCLLLVFSVAVAIF. Residues 279 to 636 are Cytoplasmic-facing; it reads RSRRASFLSS…RVADDDVAKN (358 aa). The 305-residue stretch at 324–628 folds into the Protein kinase domain; it reads FDPKRKIGDG…LRRIRSHTRV (305 aa). ATP is bound by residues 330–338 and Lys352; that span reads IGDGGFGSV. The Proton acceptor role is filled by Asp458.

This sequence belongs to the protein kinase superfamily. Ser/Thr protein kinase family.

Its subcellular location is the cell membrane. It carries out the reaction L-seryl-[protein] + ATP = O-phospho-L-seryl-[protein] + ADP + H(+). The enzyme catalyses L-threonyl-[protein] + ATP = O-phospho-L-threonyl-[protein] + ADP + H(+). This chain is LEAF RUST 10 DISEASE-RESISTANCE LOCUS RECEPTOR-LIKE PROTEIN KINASE-like 1.5, found in Arabidopsis thaliana (Mouse-ear cress).